Here is a 134-residue protein sequence, read N- to C-terminus: Large ribosomal subunit protein uL16c (134 aa).

It belongs to the universal ribosomal protein uL16 family. In terms of assembly, part of the 50S ribosomal subunit.

The protein localises to the plastid. Its subcellular location is the chloroplast. The sequence is that of Large ribosomal subunit protein uL16c from Atropa belladonna (Belladonna).